A 78-amino-acid chain; its full sequence is Hainantoxin-XX (78 aa).

An N-terminal signal peptide occupies residues 1 to 23 (MKSATLLALSFLLIALYFLICEA). Positions 24–47 (EHSRYEEHEILEENMGDVVNLEQR) are excised as a propeptide. 3 cysteine pairs are disulfide-bonded: C49–C62, C56–C66, and C61–C77.

It belongs to the hainantoxin family. 20 subfamily. Expressed by the venom gland.

It is found in the secreted. Putative ion channel inhibitor. The protein is Hainantoxin-XX of Cyriopagopus hainanus (Chinese bird spider).